Consider the following 452-residue polypeptide: MNITLILFLIGILGFVLNRKNIILMLISIEIMLLAITFLILVSSLNMDDIIGQTYAIYIIVVAGAESAIGLAILVAFYRLINSPVKNPRSNYSGDPAPPSGGRGPYLHFNLLPVVSSCNLIQSRNYSSVLHRKIPTHTSCVWAGLNPSFITGFSDAEGSFVVTILKNPRYKIGWNVQARFQIKLNEKDRALLLLIQNYFDNIGYISKINDRSTVEFRVSDITSLNNIIIPHFEKYQLITNKYGDLVIFKQIVSLMLENKHTTLEGLKEILEHRASLNWGLSKTLKESFPSIIPVKRVKIENNILSNLSSLPLLPGGGNWVAGFSSGEANFFITMSGTKVWLRFSIAQDSRDILLLKSLVKFFNCGYIAQYKNRKVCEFIVTKINDIIIYIIPFFDQYKIEGSKYNDYVKFKEAAILIKNKEHLTEKGLNKIIELKNSLPPPASLEGGMNKNI.

A run of 3 helical transmembrane segments spans residues 1 to 21 (MNITLILFLIGILGFVLNRKN), 22 to 42 (IILMLISIEIMLLAITFLILV), and 57 to 77 (IYIIVVAGAESAIGLAILVAF). Residues 1 to 80 (MNITLILFLI…LAILVAFYRL (80 aa)) form a ndh-4L exon 1 encoded region. Residues 81-452 (INSPVKNPRS…SLEGGMNKNI (372 aa)) form a ndh-4L intron 1 encoded region.

In the N-terminal section; belongs to the complex I subunit 4L family. It in the C-terminal section; belongs to the LAGLIDADG endonuclease family.

The protein localises to the mitochondrion membrane. In terms of biological role, mitochondrial DNA endonuclease involved in intron homing. The chain is Probable intron-encoded endonuclease 2 from Neurospora crassa (strain ATCC 24698 / 74-OR23-1A / CBS 708.71 / DSM 1257 / FGSC 987).